The following is a 473-amino-acid chain: Hyaluronidase-2 (473 aa).

Positions 1-20 (MRAGPGPTVTLALVLAVSWA) are cleaved as a signal peptide. Disulfide bonds link Cys47–Cys340 and Cys211–Cys227. 2 N-linked (GlcNAc...) asparagine glycosylation sites follow: Asn74 and Asn103. Glu135 functions as the Proton donor in the catalytic mechanism. Asn357 carries N-linked (GlcNAc...) asparagine glycosylation. The region spanning 361 to 439 (ATQYCSRAQC…YLGWSGEQCQ (79 aa)) is the EGF-like domain. Intrachain disulfides connect Cys365–Cys376, Cys370–Cys427, and Cys429–Cys438. Gly448 is lipidated: GPI-anchor amidated glycine. The propeptide at 449 to 473 (ASEAWAGSHLTSLLALAALAFTWTL) is removed in mature form.

This sequence belongs to the glycosyl hydrolase 56 family. Interacts with MST1R. Widely expressed (at protein level).

The protein localises to the cell membrane. The catalysed reaction is Random hydrolysis of (1-&gt;4)-linkages between N-acetyl-beta-D-glucosamine and D-glucuronate residues in hyaluronate.. Catalyzes hyaluronan degradation into small fragments that are endocytosed and degraded in lysosomes by HYAL1 and exoglycosidases. Essential for the breakdown of extracellular matrix hyaluronan. The sequence is that of Hyaluronidase-2 (HYAL2) from Homo sapiens (Human).